We begin with the raw amino-acid sequence, 287 residues long: Bifunctional protein FolD (287 aa).

NADP(+) contacts are provided by residues 160–162 (GRS), Ser-189, and Thr-230.

The protein belongs to the tetrahydrofolate dehydrogenase/cyclohydrolase family. In terms of assembly, homodimer.

It catalyses the reaction (6R)-5,10-methylene-5,6,7,8-tetrahydrofolate + NADP(+) = (6R)-5,10-methenyltetrahydrofolate + NADPH. It carries out the reaction (6R)-5,10-methenyltetrahydrofolate + H2O = (6R)-10-formyltetrahydrofolate + H(+). Its pathway is one-carbon metabolism; tetrahydrofolate interconversion. In terms of biological role, catalyzes the oxidation of 5,10-methylenetetrahydrofolate to 5,10-methenyltetrahydrofolate and then the hydrolysis of 5,10-methenyltetrahydrofolate to 10-formyltetrahydrofolate. In Chlamydia muridarum (strain MoPn / Nigg), this protein is Bifunctional protein FolD.